Here is a 174-residue protein sequence, read N- to C-terminus: Large ribosomal subunit protein uL10 (174 aa).

Belongs to the universal ribosomal protein uL10 family. As to quaternary structure, part of the ribosomal stalk of the 50S ribosomal subunit. The N-terminus interacts with L11 and the large rRNA to form the base of the stalk. The C-terminus forms an elongated spine to which L12 dimers bind in a sequential fashion forming a multimeric L10(L12)X complex.

Its function is as follows. Forms part of the ribosomal stalk, playing a central role in the interaction of the ribosome with GTP-bound translation factors. This chain is Large ribosomal subunit protein uL10, found in Anaeromyxobacter sp. (strain Fw109-5).